The following is a 196-amino-acid chain: Small nuclear ribonucleoprotein-associated protein B (196 aa).

The Sm domain occupies 7-101; that stretch reads AHSSRLANLI…ILSTVVEDKP (95 aa). The short motif at 105-132 is the Nuclear localization signal element; that stretch reads KKERLVRDKKEKKQAQKQTKLRKEKEKK. The span at 108 to 118 shows a compositional bias: basic and acidic residues; sequence RLVRDKKEKKQ. Positions 108–196 are disordered; that stretch reads RLVRDKKEKK…FQPPPGFKRK (89 aa). Residues 140 to 181 are compositionally biased toward polar residues; it reads NTANAKHTSSNSREIAQPSSSRYNGGNDNIGANRSRFNNEAP.

Belongs to the snRNP SmB/SmN family. In terms of assembly, component of the Sm core complex, present in spliceosomal snRNP U1, U2, U4/U6 and U5. The core complex contains SMB1, SMD1, SMD2, SMD3, SME1, SMX3 and SMX2 (Sm proteins B, D1, D2, D3, E, F and G, respectively), and is probably a heptameric ring structure. SMB1 specifically interacts with SMD3. Belongs to the CWC complex (or CEF1-associated complex), a spliceosome sub-complex reminiscent of a late-stage spliceosome composed of the U2, U5 and U6 snRNAs and at least BUD13, BUD31, BRR2, CDC40, CEF1, CLF1, CUS1, CWC2, CWC15, CWC21, CWC22, CWC23, CWC24, CWC25, CWC27, ECM2, HSH155, IST3, ISY1, LEA1, MSL1, NTC20, PRP8, PRP9, PRP11, PRP19, PRP21, PRP22, PRP45, PRP46, SLU7, SMB1, SMD1, SMD2, SMD3, SMX2, SMX3, SNT309, SNU114, SPP2, SYF1, SYF2, RSE1 and YJU2. Component of the U4/U6-U5 tri-snRNP complex composed of the U4, U6 and U5 snRNAs and at least PRP3, PRP4, PRP6, PRP8, PRP18, PRP38, SNU13, SNU23, SNU66, SNU114, SPP381, SMB1, SMD1, SMD2, SMD3, SMX2, SMX3, LSM2, LSM3, LSM4, LSM5, LSM6, LSM7, LSM8, BRR2 and DIB1. Interacts with the trimethylguanosine synthase TGS1.

It is found in the nucleus. Its subcellular location is the cytoplasm. Functionally, plays a role in pre-mRNA splicing as a core component of the spliceosomal U1, U2, U4 and U5 small nuclear ribonucleoproteins (snRNPs), the building blocks of the spliceosome. The chain is Small nuclear ribonucleoprotein-associated protein B (SMB1) from Saccharomyces cerevisiae (strain ATCC 204508 / S288c) (Baker's yeast).